Here is a 264-residue protein sequence, read N- to C-terminus: Thymidylate synthase (264 aa).

Residues Arg-21 and 126–127 contribute to the dUMP site; that span reads RR. Cys-146 functions as the Nucleophile in the catalytic mechanism. DUMP contacts are provided by residues 166 to 169, Asn-177, and 207 to 209; these read RSAD and HLY. Residue Asp-169 coordinates (6R)-5,10-methylene-5,6,7,8-tetrahydrofolate. Ala-263 contacts (6R)-5,10-methylene-5,6,7,8-tetrahydrofolate.

Belongs to the thymidylate synthase family. Bacterial-type ThyA subfamily. As to quaternary structure, homodimer.

It localises to the cytoplasm. It carries out the reaction dUMP + (6R)-5,10-methylene-5,6,7,8-tetrahydrofolate = 7,8-dihydrofolate + dTMP. It participates in pyrimidine metabolism; dTTP biosynthesis. In terms of biological role, catalyzes the reductive methylation of 2'-deoxyuridine-5'-monophosphate (dUMP) to 2'-deoxythymidine-5'-monophosphate (dTMP) while utilizing 5,10-methylenetetrahydrofolate (mTHF) as the methyl donor and reductant in the reaction, yielding dihydrofolate (DHF) as a by-product. This enzymatic reaction provides an intracellular de novo source of dTMP, an essential precursor for DNA biosynthesis. The protein is Thymidylate synthase of Rhodopseudomonas palustris (strain BisB5).